Consider the following 218-residue polypeptide: N-(5'-phosphoribosyl)anthranilate isomerase (218 aa).

It belongs to the TrpF family.

The catalysed reaction is N-(5-phospho-beta-D-ribosyl)anthranilate = 1-(2-carboxyphenylamino)-1-deoxy-D-ribulose 5-phosphate. It functions in the pathway amino-acid biosynthesis; L-tryptophan biosynthesis; L-tryptophan from chorismate: step 3/5. This is N-(5'-phosphoribosyl)anthranilate isomerase from Stenotrophomonas maltophilia (strain R551-3).